The primary structure comprises 953 residues: Lysosomal alpha-glucosidase (953 aa).

The first 27 residues, 1–27 (MNIRKPLCSNSVVGACTLVSLTTAVIL), serve as a signal peptide directing secretion. Residues 28 to 69 (GHLMLRELMLLPQDLHESSSGLWKTYRPHHQESYEPAPLHIQ) constitute a propeptide that is removed on maturation. Residues 80-131 (TQCDVTPNSRFDCAPDKGITQEQCEARGCCWVPAGQVLNGPVMGQPWCFFPP) form the P-type domain. 3 disulfide bridges follow: C82-C109, C92-C108, and C103-C127. N140, N233, and N390 each carry an N-linked (GlcNAc...) asparagine glycan. Residue D404 coordinates substrate. N470 carries an N-linked (GlcNAc...) asparagine glycan. Residue D518 is the Nucleophile of the active site. E521 is a catalytic residue. C533 and C558 are oxidised to a cystine. Positions 600 and 616 each coordinate substrate. An intrachain disulfide couples C647 to C658. An N-linked (GlcNAc...) asparagine glycan is attached at N652. H674 provides a ligand contact to substrate. 2 N-linked (GlcNAc...) asparagine glycosylation sites follow: N883 and N926.

Belongs to the glycosyl hydrolase 31 family.

Its subcellular location is the lysosome. The protein resides in the lysosome membrane. It carries out the reaction Hydrolysis of terminal, non-reducing (1-&gt;4)-linked alpha-D-glucose residues with release of alpha-D-glucose.. Functionally, essential for the degradation of glycogen in lysosomes. Has highest activity on alpha-1,4-linked glycosidic linkages, but can also hydrolyze alpha-1,6-linked glucans. This Rattus norvegicus (Rat) protein is Lysosomal alpha-glucosidase (Gaa).